The chain runs to 326 residues: Probable sodium/potassium-transporting ATPase subunit beta-3 (326 aa).

The Cytoplasmic segment spans residues 1-59; the sequence is MMSSRTRKIYLFVFMFISTSLQLMNGEAKAEPETFRQFLYNKQKGTVLGRTGTSWCQIT. The helical; Signal-anchor for type II membrane protein transmembrane segment at 60-80 threads the bilayer; sequence VFYIIFYIFLSAFFIGCLAIF. The Lumenal portion of the chain corresponds to 81–326; sequence LKTLDPKVPR…DKKPVAAPAA (246 aa). 2 N-linked (GlcNAc...) asparagine glycosylation sites follow: Asn144 and Asn147. A disulfide bridge links Cys234 with Cys291.

The protein belongs to the X(+)/potassium ATPases subunit beta family. The sodium/potassium-transporting ATPase is composed of a catalytic alpha subunit, an auxiliary non-catalytic beta subunit and an additional regulatory subunit.

Its subcellular location is the cell membrane. Its function is as follows. This is the non-catalytic component of the active enzyme, which catalyzes the hydrolysis of ATP coupled with the exchange of Na(+) and K(+) ions across the plasma membrane. The beta subunit regulates, through assembly of alpha/beta heterodimers, the number of sodium pumps transported to the plasma membrane. Implicated in genomic response to various soil bacteria that affects fitness, lifespan and brood size. This Caenorhabditis briggsae protein is Probable sodium/potassium-transporting ATPase subunit beta-3 (nkb-3).